We begin with the raw amino-acid sequence, 263 residues long: Tryptophan synthase alpha chain (263 aa).

Catalysis depends on proton acceptor residues glutamate 49 and aspartate 60.

This sequence belongs to the TrpA family. As to quaternary structure, tetramer of two alpha and two beta chains.

The enzyme catalyses (1S,2R)-1-C-(indol-3-yl)glycerol 3-phosphate + L-serine = D-glyceraldehyde 3-phosphate + L-tryptophan + H2O. It participates in amino-acid biosynthesis; L-tryptophan biosynthesis; L-tryptophan from chorismate: step 5/5. Its function is as follows. The alpha subunit is responsible for the aldol cleavage of indoleglycerol phosphate to indole and glyceraldehyde 3-phosphate. The chain is Tryptophan synthase alpha chain from Cereibacter sphaeroides (strain ATCC 17029 / ATH 2.4.9) (Rhodobacter sphaeroides).